The sequence spans 428 residues: uncharacterized protein (428 aa).

Residues 72-91 (SQGSPVAPSPNHRSTMYSSS) form a disordered region. Ser127 carries the post-translational modification Phosphoserine.

This is an uncharacterized protein from Saccharomyces cerevisiae (strain ATCC 204508 / S288c) (Baker's yeast).